Here is a 920-residue protein sequence, read N- to C-terminus: 2-oxoadipate dehydrogenase complex component E1 (920 aa).

2 positions are modified to N6-succinyllysine: K183 and K188. The segment at 299–318 is disordered; that stretch reads GKTRGRQQSQEDGDYSPNGS. Residues K800 and K818 each carry the N6-succinyllysine modification.

This sequence belongs to the alpha-ketoglutarate dehydrogenase family. In terms of assembly, the 2-oxoadipate dehydrogenase complex is composed of OADH (2-oxoadipate dehydrogenase; E1a), DLST (dihydrolipoamide succinyltransferase; E2) and DLD (dihydrolipoamide dehydrogenase; E3). E1a functional unit is a dimer. Thiamine diphosphate is required as a cofactor.

It localises to the mitochondrion. The catalysed reaction is N(6)-[(R)-lipoyl]-L-lysyl-[protein] + 2-oxoadipate + H(+) = N(6)-[(R)-S(8)-glutaryldihydrolipoyl]-L-lysyl-[protein] + CO2. Its pathway is amino-acid degradation. In terms of biological role, 2-oxoadipate dehydrogenase (E1a) component of the 2-oxoadipate dehydrogenase complex (OADHC). Participates in the first step, rate limiting for the overall conversion of 2-oxoadipate (alpha-ketoadipate) to glutaryl-CoA and CO(2) catalyzed by the whole OADHC. Catalyzes the irreversible decarboxylation of 2-oxoadipate via the thiamine diphosphate (ThDP) cofactor and subsequent transfer of the decarboxylated acyl intermediate on an oxidized dihydrolipoyl group that is covalently amidated to the E2 enzyme (dihydrolipoyllysine-residue succinyltransferase or DLST). Can catalyze the decarboxylation of 2-oxoglutarate in vitro, but at a much lower rate than 2-oxoadipate. Responsible for the last step of L-lysine, L-hydroxylysine and L-tryptophan catabolism with the common product being 2-oxoadipate. This Rattus norvegicus (Rat) protein is 2-oxoadipate dehydrogenase complex component E1 (Dhtkd1).